The sequence spans 463 residues: Phosphoglucosamine mutase (463 aa).

Residue serine 101 is the Phosphoserine intermediate of the active site. Mg(2+) is bound by residues serine 101, aspartate 256, aspartate 258, and aspartate 260. Serine 101 carries the phosphoserine modification.

Belongs to the phosphohexose mutase family. Mg(2+) serves as cofactor. Post-translationally, activated by phosphorylation.

It carries out the reaction alpha-D-glucosamine 1-phosphate = D-glucosamine 6-phosphate. Catalyzes the conversion of glucosamine-6-phosphate to glucosamine-1-phosphate. The polypeptide is Phosphoglucosamine mutase (Desulforapulum autotrophicum (strain ATCC 43914 / DSM 3382 / VKM B-1955 / HRM2) (Desulfobacterium autotrophicum)).